The primary structure comprises 70 residues: DNA-directed RNA polymerase subunit omega (70 aa).

It belongs to the RNA polymerase subunit omega family. The RNAP catalytic core consists of 2 alpha, 1 beta, 1 beta' and 1 omega subunit. When a sigma factor is associated with the core the holoenzyme is formed, which can initiate transcription.

The catalysed reaction is RNA(n) + a ribonucleoside 5'-triphosphate = RNA(n+1) + diphosphate. Functionally, promotes RNA polymerase assembly. Latches the N- and C-terminal regions of the beta' subunit thereby facilitating its interaction with the beta and alpha subunits. This Staphylococcus haemolyticus (strain JCSC1435) protein is DNA-directed RNA polymerase subunit omega.